Here is a 70-residue protein sequence, read N- to C-terminus: Small ribosomal subunit protein bS21A (70 aa).

The protein belongs to the bacterial ribosomal protein bS21 family.

The protein is Small ribosomal subunit protein bS21A of Burkholderia orbicola (strain AU 1054).